Reading from the N-terminus, the 267-residue chain is Probable beta-lactamase YbxI (267 aa).

A signal peptide spans 1–23 (MKKWIYVVLVLSIAGIGGFSVHA). Residue Ser76 is the Acyl-ester intermediate of the active site. The residue at position 79 (Lys79) is an N6-carboxylysine. 214–216 (KTG) serves as a coordination point for substrate.

Belongs to the class-D beta-lactamase family.

The enzyme catalyses a beta-lactam + H2O = a substituted beta-amino acid. The polypeptide is Probable beta-lactamase YbxI (ybxI) (Bacillus subtilis (strain 168)).